The primary structure comprises 273 residues: Phosphate import ATP-binding protein PstB (273 aa).

A disordered region spans residues 1 to 20; the sequence is MTTVSTAAASGPAVPPPRID. Positions 27–268 constitute an ABC transporter domain; sequence VAARNLNFYY…PSDRRTQDYI (242 aa). 59–66 contributes to the ATP binding site; sequence GPSGCGKS.

This sequence belongs to the ABC transporter superfamily. Phosphate importer (TC 3.A.1.7) family. In terms of assembly, the complex is composed of two ATP-binding proteins (PstB), two transmembrane proteins (PstC and PstA) and a solute-binding protein (PstS).

It localises to the cell inner membrane. It catalyses the reaction phosphate(out) + ATP + H2O = ADP + 2 phosphate(in) + H(+). In terms of biological role, part of the ABC transporter complex PstSACB involved in phosphate import. Responsible for energy coupling to the transport system. This chain is Phosphate import ATP-binding protein PstB, found in Nitrobacter winogradskyi (strain ATCC 25391 / DSM 10237 / CIP 104748 / NCIMB 11846 / Nb-255).